Here is an 89-residue protein sequence, read N- to C-terminus: Small ribosomal subunit protein uS15c (89 aa).

The protein belongs to the universal ribosomal protein uS15 family. As to quaternary structure, part of the 30S ribosomal subunit.

Its subcellular location is the plastid. It is found in the organellar chromatophore. This is Small ribosomal subunit protein uS15c (rps15) from Paulinella chromatophora.